The chain runs to 405 residues: Cysteine desulfurase IscS (405 aa).

Pyridoxal 5'-phosphate is bound by residues Ala-75 to Thr-76, Asn-156, Gln-184, and Ser-204 to His-206. Lys-207 carries the N6-(pyridoxal phosphate)lysine modification. Residue Thr-244 participates in pyridoxal 5'-phosphate binding. Cys-329 serves as the catalytic Cysteine persulfide intermediate. Cys-329 is a [2Fe-2S] cluster binding site.

The protein belongs to the class-V pyridoxal-phosphate-dependent aminotransferase family. NifS/IscS subfamily. Homodimer. Forms a heterotetramer with IscU, interacts with other sulfur acceptors. The cofactor is pyridoxal 5'-phosphate.

Its subcellular location is the cytoplasm. It carries out the reaction (sulfur carrier)-H + L-cysteine = (sulfur carrier)-SH + L-alanine. Its pathway is cofactor biosynthesis; iron-sulfur cluster biosynthesis. Functionally, master enzyme that delivers sulfur to a number of partners involved in Fe-S cluster assembly, tRNA modification or cofactor biosynthesis. Catalyzes the removal of elemental sulfur atoms from cysteine to produce alanine. Functions as a sulfur delivery protein for Fe-S cluster synthesis onto IscU, an Fe-S scaffold assembly protein, as well as other S acceptor proteins. In Methylobacillus flagellatus (strain ATCC 51484 / DSM 6875 / VKM B-1610 / KT), this protein is Cysteine desulfurase IscS.